The following is a 428-amino-acid chain: Serine hydroxymethyltransferase (428 aa).

(6S)-5,6,7,8-tetrahydrofolate is bound by residues Leu117 and Gly121–Leu123. Lys226 carries the post-translational modification N6-(pyridoxal phosphate)lysine.

Belongs to the SHMT family. As to quaternary structure, homodimer. Requires pyridoxal 5'-phosphate as cofactor.

It is found in the cytoplasm. The catalysed reaction is (6R)-5,10-methylene-5,6,7,8-tetrahydrofolate + glycine + H2O = (6S)-5,6,7,8-tetrahydrofolate + L-serine. The protein operates within one-carbon metabolism; tetrahydrofolate interconversion. It participates in amino-acid biosynthesis; glycine biosynthesis; glycine from L-serine: step 1/1. Catalyzes the reversible interconversion of serine and glycine with tetrahydrofolate (THF) serving as the one-carbon carrier. This reaction serves as the major source of one-carbon groups required for the biosynthesis of purines, thymidylate, methionine, and other important biomolecules. Also exhibits THF-independent aldolase activity toward beta-hydroxyamino acids, producing glycine and aldehydes, via a retro-aldol mechanism. The polypeptide is Serine hydroxymethyltransferase (Aquifex aeolicus (strain VF5)).